Consider the following 482-residue polypeptide: tRNA-2-methylthio-N(6)-dimethylallyladenosine synthase (482 aa).

One can recognise an MTTase N-terminal domain in the interval 3–120 (KKLHIKTWGC…LPEMIKQVQG (118 aa)). [4Fe-4S] cluster is bound by residues Cys-12, Cys-49, Cys-83, Cys-158, Cys-162, and Cys-165. The Radical SAM core domain maps to 144 to 376 (KADGPSAFVS…QNRITQMAQQ (233 aa)). One can recognise a TRAM domain in the interval 379–442 (RQMFDTEQRI…PNSLRGDLIR (64 aa)).

Belongs to the methylthiotransferase family. MiaB subfamily. As to quaternary structure, monomer. The cofactor is [4Fe-4S] cluster.

The protein localises to the cytoplasm. It carries out the reaction N(6)-dimethylallyladenosine(37) in tRNA + (sulfur carrier)-SH + AH2 + 2 S-adenosyl-L-methionine = 2-methylsulfanyl-N(6)-dimethylallyladenosine(37) in tRNA + (sulfur carrier)-H + 5'-deoxyadenosine + L-methionine + A + S-adenosyl-L-homocysteine + 2 H(+). Its function is as follows. Catalyzes the methylthiolation of N6-(dimethylallyl)adenosine (i(6)A), leading to the formation of 2-methylthio-N6-(dimethylallyl)adenosine (ms(2)i(6)A) at position 37 in tRNAs that read codons beginning with uridine. The polypeptide is tRNA-2-methylthio-N(6)-dimethylallyladenosine synthase (Pseudoalteromonas translucida (strain TAC 125)).